The chain runs to 267 residues: Apolipoprotein A-I (267 aa).

The N-terminal stretch at 1–18 is a signal peptide; that stretch reads MKATVLTLAVLFLTGSQA. 2 consecutive repeat copies span residues 68-89 and 90-111. A 10 X approximate tandem repeats region spans residues 68 to 267; the sequence is LKLLDNWDSV…EEYTKKLSTQ (200 aa). Residue Met110 is modified to Methionine sulfoxide. Residues 112 to 122 form a 3; half-length repeat; it reads KDLEEVKAKVQ. 5 tandem repeats follow at residues 123–144, 145–166, 167–188, 189–210, and 211–232. Met136 bears the Methionine sulfoxide mark. The 9; half-length repeat unit spans residues 233–243; it reads PALEDLRQGLL. Residues 244-267 form repeat 10; it reads PVLESFKVSFLSALEEYTKKLSTQ.

Belongs to the apolipoprotein A1/A4/E family. As to quaternary structure, homodimer. Interacts with APOA1BP and CLU. Component of a sperm activating protein complex (SPAP), consisting of APOA1, an immunoglobulin heavy chain, an immunoglobulin light chain and albumin. Interacts with NDRG1. Interacts with SCGB3A2. Interacts with NAXE and YJEFN3. Post-translationally, glycosylated. Palmitoylated. In terms of processing, phosphorylation sites are present in the extracellular medium. As to expression, major protein of plasma HDL, also found in chylomicrons.

Its subcellular location is the secreted. Participates in the reverse transport of cholesterol from tissues to the liver for excretion by promoting cholesterol efflux from tissues and by acting as a cofactor for the lecithin cholesterol acyltransferase (LCAT). As part of the SPAP complex, activates spermatozoa motility. The protein is Apolipoprotein A-I (APOA1) of Papio hamadryas (Hamadryas baboon).